The primary structure comprises 82 residues: Exodeoxyribonuclease 7 small subunit (82 aa).

Belongs to the XseB family. In terms of assembly, heterooligomer composed of large and small subunits.

The protein resides in the cytoplasm. It carries out the reaction Exonucleolytic cleavage in either 5'- to 3'- or 3'- to 5'-direction to yield nucleoside 5'-phosphates.. Bidirectionally degrades single-stranded DNA into large acid-insoluble oligonucleotides, which are then degraded further into small acid-soluble oligonucleotides. The sequence is that of Exodeoxyribonuclease 7 small subunit from Pectobacterium carotovorum subsp. carotovorum (strain PC1).